The chain runs to 880 residues: Valine--tRNA ligase (880 aa).

Positions 51–61 match the 'HIGH' region motif; it reads PNVTGELHLGH. The short motif at 529–533 is the 'KMSKS' region element; the sequence is KMSKT. Residue Lys532 coordinates ATP. Residues 815–854 adopt a coiled-coil conformation; the sequence is MSTMVDLEVEAKRVKAEISELEIQIERLSTRLSDEQFLAK.

The protein belongs to the class-I aminoacyl-tRNA synthetase family. ValS type 1 subfamily. Monomer.

Its subcellular location is the cytoplasm. It carries out the reaction tRNA(Val) + L-valine + ATP = L-valyl-tRNA(Val) + AMP + diphosphate. Catalyzes the attachment of valine to tRNA(Val). As ValRS can inadvertently accommodate and process structurally similar amino acids such as threonine, to avoid such errors, it has a 'posttransfer' editing activity that hydrolyzes mischarged Thr-tRNA(Val) in a tRNA-dependent manner. The sequence is that of Valine--tRNA ligase from Dehalococcoides mccartyi (strain CBDB1).